The following is a 166-amino-acid chain: MASSGFSGDETAPFFGFLGAAAALVFSCMGAAYGTAKSGVGVASMGVMRPELVMKSIVPVVMAGVLGIYGLIIAVIISTGINPKAKSYYLFDGYAHLSSGLACGLAGLSAGMAIGIVGDAGVRANAQQPKLFVGMILILIFAEALALYGLIVGIILSSRAGQSRAE.

The Lumenal segment spans residues 1-13 (MASSGFSGDETAP). Residues 14–34 (FFGFLGAAAALVFSCMGAAYG) traverse the membrane as a helical segment. The Cytoplasmic portion of the chain corresponds to 35 to 56 (TAKSGVGVASMGVMRPELVMKS). A helical membrane pass occupies residues 57–77 (IVPVVMAGVLGIYGLIIAVII). The Lumenal portion of the chain corresponds to 78–96 (STGINPKAKSYYLFDGYAH). Residues 97–118 (LSSGLACGLAGLSAGMAIGIVG) traverse the membrane as a helical segment. The Cytoplasmic segment spans residues 119 to 130 (DAGVRANAQQPK). A helical membrane pass occupies residues 131 to 156 (LFVGMILILIFAEALALYGLIVGIIL). Residues 157–166 (SSRAGQSRAE) are Lumenal-facing.

This sequence belongs to the V-ATPase proteolipid subunit family. In terms of assembly, V-ATPase is a heteromultimeric enzyme composed of a peripheral catalytic V1 complex (components A to H) attached to an integral membrane V0 proton pore complex (components: a, c, c'', d and e). The proteolipid components c and c'' are present as a hexameric ring that forms the proton-conducting pore. Interacts with APD2.

It is found in the vacuole membrane. Functionally, proton-conducting pore forming subunit of the membrane integral V0 complex of vacuolar ATPase. V-ATPase is responsible for acidifying a variety of intracellular compartments in eukaryotic cells. This Arabidopsis thaliana (Mouse-ear cress) protein is V-type proton ATPase subunit c4 (VHA-c4).